The chain runs to 368 residues: Biotin synthase (368 aa).

One can recognise a Radical SAM core domain in the interval 46 to 277; that stretch reads VHGDEVALCG…AAHIFVMGGR (232 aa). [4Fe-4S] cluster contacts are provided by C64, C68, and C71. Positions 109, 142, and 202 each coordinate [2Fe-2S] cluster. The tract at residues 347-368 is disordered; the sequence is RAAEPGGKRGLPVVGPPRGGCA.

This sequence belongs to the radical SAM superfamily. Biotin synthase family. As to quaternary structure, homodimer. The cofactor is [4Fe-4S] cluster. [2Fe-2S] cluster is required as a cofactor.

It catalyses the reaction (4R,5S)-dethiobiotin + (sulfur carrier)-SH + 2 reduced [2Fe-2S]-[ferredoxin] + 2 S-adenosyl-L-methionine = (sulfur carrier)-H + biotin + 2 5'-deoxyadenosine + 2 L-methionine + 2 oxidized [2Fe-2S]-[ferredoxin]. It participates in cofactor biosynthesis; biotin biosynthesis; biotin from 7,8-diaminononanoate: step 2/2. In terms of biological role, catalyzes the conversion of dethiobiotin (DTB) to biotin by the insertion of a sulfur atom into dethiobiotin via a radical-based mechanism. This Anaeromyxobacter sp. (strain Fw109-5) protein is Biotin synthase.